The primary structure comprises 392 residues: Phosphoglycerate kinase (392 aa).

Residues 21 to 23, Arg-36, 59 to 62, Arg-113, and Arg-146 each bind substrate; these read DLN and HLGR. Residues Lys-197, Glu-319, and 345-348 contribute to the ATP site; that span reads GGDT.

Belongs to the phosphoglycerate kinase family. Monomer.

The protein localises to the cytoplasm. The enzyme catalyses (2R)-3-phosphoglycerate + ATP = (2R)-3-phospho-glyceroyl phosphate + ADP. Its pathway is carbohydrate degradation; glycolysis; pyruvate from D-glyceraldehyde 3-phosphate: step 2/5. The sequence is that of Phosphoglycerate kinase from Thioalkalivibrio sulfidiphilus (strain HL-EbGR7).